We begin with the raw amino-acid sequence, 396 residues long: Acetate kinase (396 aa).

Residue asparagine 8 coordinates Mg(2+). Position 15 (lysine 15) interacts with ATP. Arginine 89 contributes to the substrate binding site. Residue aspartate 146 is the Proton donor/acceptor of the active site. ATP is bound by residues 206-210 (HIGNG), 283-285 (DMR), and 331-335 (GVGEN). Glutamate 383 contributes to the Mg(2+) binding site.

The protein belongs to the acetokinase family. As to quaternary structure, homodimer. Requires Mg(2+) as cofactor. Mn(2+) serves as cofactor.

It localises to the cytoplasm. It carries out the reaction acetate + ATP = acetyl phosphate + ADP. The protein operates within metabolic intermediate biosynthesis; acetyl-CoA biosynthesis; acetyl-CoA from acetate: step 1/2. In terms of biological role, catalyzes the formation of acetyl phosphate from acetate and ATP. Can also catalyze the reverse reaction. The protein is Acetate kinase of Streptococcus pneumoniae (strain 70585).